We begin with the raw amino-acid sequence, 473 residues long: Ribulose bisphosphate carboxylase large chain (473 aa).

Substrate-binding residues include Asn116 and Thr166. Lys168 serves as the catalytic Proton acceptor. Position 170 (Lys170) interacts with substrate. Residues Lys194, Asp196, and Glu197 each coordinate Mg(2+). At Lys194 the chain carries N6-carboxylysine. The active-site Proton acceptor is the His287. Positions 288, 320, and 372 each coordinate substrate.

This sequence belongs to the RuBisCO large chain family. Type I subfamily. In terms of assembly, heterohexadecamer of 8 large chains and 8 small chains. The cofactor is Mg(2+).

The enzyme catalyses 2 (2R)-3-phosphoglycerate + 2 H(+) = D-ribulose 1,5-bisphosphate + CO2 + H2O. It carries out the reaction D-ribulose 1,5-bisphosphate + O2 = 2-phosphoglycolate + (2R)-3-phosphoglycerate + 2 H(+). RuBisCO catalyzes two reactions: the carboxylation of D-ribulose 1,5-bisphosphate, the primary event in carbon dioxide fixation, as well as the oxidative fragmentation of the pentose substrate. Both reactions occur simultaneously and in competition at the same active site. This chain is Ribulose bisphosphate carboxylase large chain, found in Methylococcus capsulatus (strain ATCC 33009 / NCIMB 11132 / Bath).